We begin with the raw amino-acid sequence, 326 residues long: L-lactate dehydrogenase (326 aa).

Residues Val-20, Asp-41, Lys-46, Tyr-71, and 85 to 86 contribute to the NAD(+) site; that span reads GA. Substrate-binding residues include Gln-88 and Arg-94. Residues Ser-107, 124-126, and Ser-149 each bind NAD(+); that span reads AAN. Position 126–129 (126–129) interacts with substrate; that stretch reads NPVD. 154 to 157 is a substrate binding site; the sequence is DTAR. Beta-D-fructose 1,6-bisphosphate is bound by residues Arg-159, 171-174, and His-174; that span reads RSVH. His-181 (proton acceptor) is an active-site residue. Tyr-226 carries the post-translational modification Phosphotyrosine. Substrate is bound at residue Thr-235.

The protein belongs to the LDH/MDH superfamily. LDH family. Homotetramer.

The protein resides in the cytoplasm. It catalyses the reaction (S)-lactate + NAD(+) = pyruvate + NADH + H(+). It participates in fermentation; pyruvate fermentation to lactate; (S)-lactate from pyruvate: step 1/1. With respect to regulation, allosterically activated by fructose 1,6-bisphosphate (FBP) alone under acidic conditions, while it requires additional activation factors such as divalent cations (Mn(2+)) under neutral conditions. Under acidic conditions, Mn(2+) is an inhibitor in the absence of fructose 1,6-bisphosphate (FBP). In case of L.casei, L-LDH binds four fructose 1,6-bisphosphate (FBP) molecules per tetramer, while usual allosteric L-LDH binds only two fructose 1,6-bisphosphate (FBP) molecules per tetramer. Catalyzes the conversion of lactate to pyruvate. The chain is L-lactate dehydrogenase from Lacticaseibacillus casei (Lactobacillus casei).